A 444-amino-acid chain; its full sequence is C4-dicarboxylate transport protein 3 (444 aa).

9 helical membrane-spanning segments follow: residues 22 to 42 (VLYV…WLWP), 60 to 80 (LIKM…IAHI), 95 to 115 (VYFE…GNLV), 162 to 182 (GEIL…MSLG), 198 to 218 (AVFG…FGAM), 236 to 256 (LIAT…GIIA), 321 to 341 (IYMT…LSFG), 346 to 366 (ILVV…AGFI), and 399 to 419 (LTNL…EGEL).

It belongs to the dicarboxylate/amino acid:cation symporter (DAACS) (TC 2.A.23) family.

The protein resides in the cell inner membrane. Its function is as follows. Responsible for the transport of dicarboxylates such as succinate, fumarate, and malate from the periplasm across the membrane. This chain is C4-dicarboxylate transport protein 3, found in Bradyrhizobium diazoefficiens (strain JCM 10833 / BCRC 13528 / IAM 13628 / NBRC 14792 / USDA 110).